We begin with the raw amino-acid sequence, 209 residues long: Type III pantothenate kinase (209 aa).

5–12 (DIGNSNAN) is a binding site for ATP. Substrate-binding positions include Y68 and 72-75 (GIDR). D74 acts as the Proton acceptor in catalysis. D89 is a K(+) binding site. Residue S92 coordinates ATP. T144 provides a ligand contact to substrate.

This sequence belongs to the type III pantothenate kinase family. As to quaternary structure, homodimer. It depends on NH4(+) as a cofactor. Requires K(+) as cofactor.

The protein resides in the cytoplasm. The catalysed reaction is (R)-pantothenate + ATP = (R)-4'-phosphopantothenate + ADP + H(+). Its pathway is cofactor biosynthesis; coenzyme A biosynthesis; CoA from (R)-pantothenate: step 1/5. In terms of biological role, catalyzes the phosphorylation of pantothenate (Pan), the first step in CoA biosynthesis. The sequence is that of Type III pantothenate kinase from Campylobacter jejuni subsp. jejuni serotype O:2 (strain ATCC 700819 / NCTC 11168).